The chain runs to 94 residues: Aspartyl/glutamyl-tRNA(Asn/Gln) amidotransferase subunit C (94 aa).

This sequence belongs to the GatC family. Heterotrimer of A, B and C subunits.

The enzyme catalyses L-glutamyl-tRNA(Gln) + L-glutamine + ATP + H2O = L-glutaminyl-tRNA(Gln) + L-glutamate + ADP + phosphate + H(+). It catalyses the reaction L-aspartyl-tRNA(Asn) + L-glutamine + ATP + H2O = L-asparaginyl-tRNA(Asn) + L-glutamate + ADP + phosphate + 2 H(+). Functionally, allows the formation of correctly charged Asn-tRNA(Asn) or Gln-tRNA(Gln) through the transamidation of misacylated Asp-tRNA(Asn) or Glu-tRNA(Gln) in organisms which lack either or both of asparaginyl-tRNA or glutaminyl-tRNA synthetases. The reaction takes place in the presence of glutamine and ATP through an activated phospho-Asp-tRNA(Asn) or phospho-Glu-tRNA(Gln). This is Aspartyl/glutamyl-tRNA(Asn/Gln) amidotransferase subunit C from Heliobacterium modesticaldum (strain ATCC 51547 / Ice1).